We begin with the raw amino-acid sequence, 892 residues long: Alanine--tRNA ligase (892 aa).

Residues H596, H600, C700, and H704 each coordinate Zn(2+).

The protein belongs to the class-II aminoacyl-tRNA synthetase family. Requires Zn(2+) as cofactor.

The protein localises to the cytoplasm. It carries out the reaction tRNA(Ala) + L-alanine + ATP = L-alanyl-tRNA(Ala) + AMP + diphosphate. In terms of biological role, catalyzes the attachment of alanine to tRNA(Ala) in a two-step reaction: alanine is first activated by ATP to form Ala-AMP and then transferred to the acceptor end of tRNA(Ala). Also edits incorrectly charged Ser-tRNA(Ala) and Gly-tRNA(Ala) via its editing domain. This is Alanine--tRNA ligase from Methanococcus maripaludis (strain DSM 14266 / JCM 13030 / NBRC 101832 / S2 / LL).